Reading from the N-terminus, the 177-residue chain is Large ribosomal subunit protein uL6 (177 aa).

Belongs to the universal ribosomal protein uL6 family. In terms of assembly, part of the 50S ribosomal subunit.

In terms of biological role, this protein binds to the 23S rRNA, and is important in its secondary structure. It is located near the subunit interface in the base of the L7/L12 stalk, and near the tRNA binding site of the peptidyltransferase center. The sequence is that of Large ribosomal subunit protein uL6 from Verminephrobacter eiseniae (strain EF01-2).